The chain runs to 335 residues: Glycerol-3-phosphate dehydrogenase [NAD(P)+] (335 aa).

NADPH contacts are provided by serine 10, phenylalanine 11, arginine 31, and lysine 105. Sn-glycerol 3-phosphate-binding residues include lysine 105, glycine 136, and serine 138. Residue alanine 140 coordinates NADPH. Sn-glycerol 3-phosphate-binding residues include lysine 191, aspartate 244, serine 254, arginine 255, and asparagine 256. Lysine 191 functions as the Proton acceptor in the catalytic mechanism. Arginine 255 serves as a coordination point for NADPH. 2 residues coordinate NADPH: valine 279 and glutamate 281.

The protein belongs to the NAD-dependent glycerol-3-phosphate dehydrogenase family.

It localises to the cytoplasm. It carries out the reaction sn-glycerol 3-phosphate + NAD(+) = dihydroxyacetone phosphate + NADH + H(+). It catalyses the reaction sn-glycerol 3-phosphate + NADP(+) = dihydroxyacetone phosphate + NADPH + H(+). It participates in membrane lipid metabolism; glycerophospholipid metabolism. In terms of biological role, catalyzes the reduction of the glycolytic intermediate dihydroxyacetone phosphate (DHAP) to sn-glycerol 3-phosphate (G3P), the key precursor for phospholipid synthesis. This is Glycerol-3-phosphate dehydrogenase [NAD(P)+] from Myxococcus xanthus (strain DK1622).